Reading from the N-terminus, the 1057-residue chain is Diacylglycerol kinase iota (1057 aa).

A compositionally biased stretch (low complexity) spans 15 to 59; sequence AARGPARAPAAAAAAAASPPGPCSGAACAPSAAAGAGAMNPSSSA. Disordered regions lie at residues 15–74 and 334–358; these read AARG…SSGS and LKASNRKKKRTSFKRKASKRGMEQE. Residues 337–352 are compositionally biased toward basic residues; it reads SNRKKKRTSFKRKASK. The region spanning 372-507 is the DAGKc domain; sequence PLMKPLLVFV…DRWNLHVERN (136 aa). ANK repeat units lie at residues 950-979 and 986-1015; these read DHCSLLHYAAKTGNGEIVKYILDHGPSELL and TGETALHKAACQRNRAVCQLLVDAGASLRK. Over residues 1014-1024 the composition is skewed to basic and acidic residues; it reads RKTDSKGKTPQ. Positions 1014 to 1033 are disordered; that stretch reads RKTDSKGKTPQERAQQAGDP. A PDZ-binding motif is present at residues 1055–1057; it reads TAV.

This sequence belongs to the eukaryotic diacylglycerol kinase family. Interacts (via PDZ-binding motif) with DLG4; controls the localization of DGKI to the synapse. Interacts (via PDZ-binding motif) with DLG1. Interacts (via PDZ-binding motif) with DLG2. Interacts (via PDZ-binding motif) with DLG3. May interact with RASGRP3; involved in the regulation of RASGRP3 activity. As to expression, specifically expressed in brain and retina. In brain, highly expressed in hippocampus, caudate nucleus, occipital pole, cerebral cortex, and cerebellum. Also detected in kidney.

The protein localises to the cell projection. Its subcellular location is the axon. It localises to the dendrite. The protein resides in the presynapse. It is found in the postsynapse. The protein localises to the postsynaptic density. Its subcellular location is the synaptic cell membrane. It localises to the cytoplasmic vesicle. The protein resides in the secretory vesicle. It is found in the synaptic vesicle membrane. The protein localises to the cytoplasm. Its subcellular location is the cytosol. It localises to the nucleus. The catalysed reaction is a 1,2-diacyl-sn-glycerol + ATP = a 1,2-diacyl-sn-glycero-3-phosphate + ADP + H(+). The enzyme catalyses 1,2-di-(9Z-octadecenoyl)-sn-glycerol + ATP = 1,2-di-(9Z-octadecenoyl)-sn-glycero-3-phosphate + ADP + H(+). It catalyses the reaction 1-octadecanoyl-2-(5Z,8Z,11Z,14Z-eicosatetraenoyl)-sn-glycerol + ATP = 1-octadecanoyl-2-(5Z,8Z,11Z,14Z-eicosatetraenoyl)-sn-glycero-3-phosphate + ADP + H(+). It carries out the reaction 1-octadecanoyl-2-(9Z,12Z)-octadecadienoyl-sn-glycerol + ATP = 1-octadecanoyl-2-(9Z,12Z-octadecadienoyl)-sn-glycero-3-phosphate + ADP + H(+). Its pathway is lipid metabolism; glycerolipid metabolism. In terms of biological role, diacylglycerol kinase that converts diacylglycerol/DAG into phosphatidic acid/phosphatidate/PA and regulates the respective levels of these two bioactive lipids. Thereby, acts as a central switch between the signaling pathways activated by these second messengers with different cellular targets and opposite effects in numerous biological processes. Has probably no preference for any of the diacylglycerols in terms of the acyl chain composition, especially for the acyl chain at the sn-2 position. By controlling the diacylglycerol/DAG-mediated activation of RASGRP3, negatively regulates the Rap1 signaling pathway. May play a role in presynaptic diacylglycerol/DAG signaling and control neurotransmitter release during metabotropic glutamate receptor-dependent long-term depression. The sequence is that of Diacylglycerol kinase iota from Homo sapiens (Human).